A 397-amino-acid polypeptide reads, in one-letter code: Iron-sulfur cluster assembly SufBD family protein Mb1497 (397 aa).

This sequence belongs to the iron-sulfur cluster assembly SufBD family.

In Mycobacterium bovis (strain ATCC BAA-935 / AF2122/97), this protein is Iron-sulfur cluster assembly SufBD family protein Mb1497.